The primary structure comprises 277 residues: Release factor glutamine methyltransferase (277 aa).

Residues 119 to 123, D142, and N184 each bind S-adenosyl-L-methionine; that span reads GTGTG. Residue 184–187 participates in substrate binding; the sequence is NPPY.

This sequence belongs to the protein N5-glutamine methyltransferase family. PrmC subfamily.

The enzyme catalyses L-glutaminyl-[peptide chain release factor] + S-adenosyl-L-methionine = N(5)-methyl-L-glutaminyl-[peptide chain release factor] + S-adenosyl-L-homocysteine + H(+). Functionally, methylates the class 1 translation termination release factors RF1/PrfA and RF2/PrfB on the glutamine residue of the universally conserved GGQ motif. The protein is Release factor glutamine methyltransferase of Enterococcus faecalis (strain ATCC 700802 / V583).